Here is a 266-residue protein sequence, read N- to C-terminus: Interleukin-1 beta (266 aa).

A propeptide spanning residues 1–113 is cleaved from the precursor; that stretch reads MAPVPEPINE…ETSSDEFLCD (113 aa).

This sequence belongs to the IL-1 family. As to quaternary structure, monomer. In its precursor form, weakly interacts with full-length MEFV; the mature cytokine does not interact at all. Interacts with integrins ITGAV:ITGBV and ITGA5:ITGB1; integrin-binding is required for IL1B signaling. Interacts with cargo receptor TMED10; the interaction is direct and is required for the secretion of IL1B mature form. Interacts with HSP90AB1; the interaction facilitates cargo translocation into the ERGIC. Interacts with HSP90B1; the interaction facilitates cargo translocation into the ERGIC.

It localises to the cytoplasm. It is found in the cytosol. The protein localises to the secreted. Its subcellular location is the lysosome. The protein resides in the extracellular exosome. In terms of biological role, potent pro-inflammatory cytokine. Initially discovered as the major endogenous pyrogen, induces prostaglandin synthesis, neutrophil influx and activation, T-cell activation and cytokine production, B-cell activation and antibody production, and fibroblast proliferation and collagen production. Promotes Th17 differentiation of T-cells. Synergizes with IL12/interleukin-12 to induce IFNG synthesis from T-helper 1 (Th1) cells. Plays a role in angiogenesis by inducing VEGF production synergistically with TNF and IL6. Involved in transduction of inflammation downstream of pyroptosis: its mature form is specifically released in the extracellular milieu by passing through the gasdermin-D (GSDMD) pore. The polypeptide is Interleukin-1 beta (IL1B) (Cervus elaphus (Red deer)).